The chain runs to 148 residues: Ubiquitin-conjugating enzyme E2 11 (148 aa).

In terms of domain architecture, UBC core spans 1-147; sequence MASKRILKEL…ARSWTQKYAM (147 aa). The active-site Glycyl thioester intermediate is the C85.

Belongs to the ubiquitin-conjugating enzyme family. In terms of assembly, interacts with the E3 ubiquitin-protein ligases MBR1 and MBR2. Ubiquitously expressed. Mainly in petals.

It catalyses the reaction S-ubiquitinyl-[E1 ubiquitin-activating enzyme]-L-cysteine + [E2 ubiquitin-conjugating enzyme]-L-cysteine = [E1 ubiquitin-activating enzyme]-L-cysteine + S-ubiquitinyl-[E2 ubiquitin-conjugating enzyme]-L-cysteine.. It functions in the pathway protein modification; protein ubiquitination. In terms of biological role, accepts the ubiquitin from the E1 complex and catalyzes its covalent attachment to other proteins. Mediates the selective degradation of short-lived and abnormal proteins. This Arabidopsis thaliana (Mouse-ear cress) protein is Ubiquitin-conjugating enzyme E2 11 (UBC11).